The primary structure comprises 272 residues: Putative pyruvate, phosphate dikinase regulatory protein (272 aa).

154 to 161 contributes to the ADP binding site; that stretch reads GVSRTSKS.

The protein belongs to the pyruvate, phosphate/water dikinase regulatory protein family. PDRP subfamily.

It catalyses the reaction N(tele)-phospho-L-histidyl/L-threonyl-[pyruvate, phosphate dikinase] + ADP = N(tele)-phospho-L-histidyl/O-phospho-L-threonyl-[pyruvate, phosphate dikinase] + AMP + H(+). It carries out the reaction N(tele)-phospho-L-histidyl/O-phospho-L-threonyl-[pyruvate, phosphate dikinase] + phosphate + H(+) = N(tele)-phospho-L-histidyl/L-threonyl-[pyruvate, phosphate dikinase] + diphosphate. Its function is as follows. Bifunctional serine/threonine kinase and phosphorylase involved in the regulation of the pyruvate, phosphate dikinase (PPDK) by catalyzing its phosphorylation/dephosphorylation. The protein is Putative pyruvate, phosphate dikinase regulatory protein of Wolbachia pipientis subsp. Culex pipiens (strain wPip).